Reading from the N-terminus, the 484-residue chain is tRNA sulfurtransferase (484 aa).

The 106-residue stretch at 61-166 (PHLIELLQCI…DKLLFIQARH (106 aa)) folds into the THUMP domain. Residues 183-184 (LI), Lys265, Gly287, and Gln296 each bind ATP. Cys344 and Cys456 are joined by a disulfide. Residues 404–483 (LGENDVILDI…FNNVQVFVKA (80 aa)) enclose the Rhodanese domain. Catalysis depends on Cys456, which acts as the Cysteine persulfide intermediate.

This sequence belongs to the ThiI family.

The protein resides in the cytoplasm. It carries out the reaction [ThiI sulfur-carrier protein]-S-sulfanyl-L-cysteine + a uridine in tRNA + 2 reduced [2Fe-2S]-[ferredoxin] + ATP + H(+) = [ThiI sulfur-carrier protein]-L-cysteine + a 4-thiouridine in tRNA + 2 oxidized [2Fe-2S]-[ferredoxin] + AMP + diphosphate. The catalysed reaction is [ThiS sulfur-carrier protein]-C-terminal Gly-Gly-AMP + S-sulfanyl-L-cysteinyl-[cysteine desulfurase] + AH2 = [ThiS sulfur-carrier protein]-C-terminal-Gly-aminoethanethioate + L-cysteinyl-[cysteine desulfurase] + A + AMP + 2 H(+). It participates in cofactor biosynthesis; thiamine diphosphate biosynthesis. Catalyzes the ATP-dependent transfer of a sulfur to tRNA to produce 4-thiouridine in position 8 of tRNAs, which functions as a near-UV photosensor. Also catalyzes the transfer of sulfur to the sulfur carrier protein ThiS, forming ThiS-thiocarboxylate. This is a step in the synthesis of thiazole, in the thiamine biosynthesis pathway. The sulfur is donated as persulfide by IscS. In Actinobacillus succinogenes (strain ATCC 55618 / DSM 22257 / CCUG 43843 / 130Z), this protein is tRNA sulfurtransferase.